The sequence spans 264 residues: MASKYQSVQPGGSLIIAWRAQGKKVLIVGGGVVAAGRILHVLNADAHVIVVSPKAGLCKEVAWRIQEKQVEWRDRGFLVEDLSDDVNMVLTAIDDPSLSSEIYKLCKSKKIPVNAADIPPECDFYFGSEIRNGPLQIMVSTNGKGPKLASLIRKKIESSINPATGMALEKTGLLRQKLRDIVPEPENSRKRMRWMIEICELWSLEELAMLDENLINRLLGYFPKKTPSYREITTPAYSKIDNYIWFGAIIISGAVLLKHVSKAR.

NAD(+) contacts are provided by residues 32 to 33 (VV) and 53 to 56 (PKAG). The active-site Proton acceptor is the aspartate 117.

This sequence belongs to the precorrin-2 dehydrogenase / sirohydrochlorin ferrochelatase family. MET8 subfamily.

It localises to the cytoplasm. The protein resides in the nucleus. The enzyme catalyses precorrin-2 + NAD(+) = sirohydrochlorin + NADH + 2 H(+). The catalysed reaction is siroheme + 2 H(+) = sirohydrochlorin + Fe(2+). It functions in the pathway porphyrin-containing compound metabolism; siroheme biosynthesis; siroheme from sirohydrochlorin: step 1/1. The protein operates within porphyrin-containing compound metabolism; siroheme biosynthesis; sirohydrochlorin from precorrin-2: step 1/1. Functionally, catalyzes the conversion of precorrin-2 into siroheme. This reaction consist of the NAD-dependent oxidation of precorrin-2 into sirohydrochlorin and its subsequent ferrochelation into siroheme. The chain is Siroheme biosynthesis protein met8 (met8) from Schizosaccharomyces pombe (strain 972 / ATCC 24843) (Fission yeast).